Reading from the N-terminus, the 87-residue chain is Putative defensin-like protein 169 (87 aa).

The first 21 residues, 1 to 21 (MKKTFSFTVLILFVIPLLVTG), serve as a signal peptide directing secretion. 4 disulfides stabilise this stretch: C36–C86, C48–C74, C53–C80, and C57–C82.

The protein belongs to the DEFL family.

It is found in the secreted. The protein is Putative defensin-like protein 169 of Arabidopsis thaliana (Mouse-ear cress).